Reading from the N-terminus, the 1131-residue chain is Probable pre-mRNA-splicing factor ATP-dependent RNA helicase mog-1 (1131 aa).

Basic and acidic residues-rich tracts occupy residues 1-12, 65-122, 139-148, 160-173, 180-225, and 407-416; these read MSDKRADGRLEG, RGVT…DRSG, WDQDDREGSS, RGER…DSER, RSER…WEEE, and GNYKESHQFA. 2 disordered regions span residues 1-225 and 389-416; these read MSDK…WEEE and MGVK…HQFA. Positions 451 to 614 constitute a Helicase ATP-binding domain; that stretch reads MNVIRENNVV…FGGNCPTFTI (164 aa). 464–471 is an ATP binding site; the sequence is GETGSGKT. The short motif at 561–564 is the DEAH box element; that stretch reads DEAH. The 184-residue stretch at 629–812 folds into the Helicase C-terminal domain; it reads PVEDYVDAAV…NVVLLLKSLG (184 aa). Composition is skewed to basic and acidic residues over residues 1085–1114 and 1121–1131; these read EMRE…RRVV and ARSERRKLWGL. The segment at 1085 to 1131 is disordered; it reads EMREAQKEMERRKEESDKAFKRPESSRRVVEVGSKSARSERRKLWGL.

The protein belongs to the DEAD box helicase family. DEAH subfamily. PRP16 sub-subfamily.

Its subcellular location is the nucleus. It catalyses the reaction ATP + H2O = ADP + phosphate + H(+). Functionally, probable ATP-binding RNA helicase involved in pre-mRNA splicing. The sequence is that of Probable pre-mRNA-splicing factor ATP-dependent RNA helicase mog-1 (mog-1) from Caenorhabditis elegans.